Consider the following 197-residue polypeptide: Phosphoheptose isomerase (197 aa).

The region spanning 34 to 196 (MVNCLLGGNK…DRTLFPQDEQ (163 aa)) is the SIS domain. 49-51 (NGG) lines the substrate pocket. Histidine 58 and glutamate 62 together coordinate Zn(2+). Substrate-binding positions include glutamate 62, 91–92 (ND), 117–119 (STS), serine 122, and glutamine 172. Glutamine 172 and histidine 180 together coordinate Zn(2+).

It belongs to the SIS family. GmhA subfamily. Homotetramer. The cofactor is Zn(2+).

The protein resides in the cytoplasm. The enzyme catalyses 2 D-sedoheptulose 7-phosphate = D-glycero-alpha-D-manno-heptose 7-phosphate + D-glycero-beta-D-manno-heptose 7-phosphate. The protein operates within carbohydrate biosynthesis; D-glycero-D-manno-heptose 7-phosphate biosynthesis; D-glycero-alpha-D-manno-heptose 7-phosphate and D-glycero-beta-D-manno-heptose 7-phosphate from sedoheptulose 7-phosphate: step 1/1. Catalyzes the isomerization of sedoheptulose 7-phosphate in D-glycero-D-manno-heptose 7-phosphate. This chain is Phosphoheptose isomerase, found in Shewanella pealeana (strain ATCC 700345 / ANG-SQ1).